A 1226-amino-acid chain; its full sequence is Chromosome-associated kinesin KIF4 (1226 aa).

A Kinesin motor domain is found at 8–337 (PVRVALRCRP…LRYADRARKI (330 aa)). 87 to 94 (GQTGSGKT) provides a ligand contact to ATP. Residues 351–1006 (ELQRLKLQVQ…YKQKLALLHV (656 aa)) adopt a coiled-coil conformation. The segment covering 494–505 (EAASFPVPEEDS) has biased composition (acidic residues). 3 disordered regions span residues 494 to 516 (EAASFPVPEEDSGEKRSSDGFTT), 722 to 741 (QRQKEAMEKRKDSQSKGMEG), and 1052 to 1078 (DLLSESESEEESDDKNWEPGNNSKQSK). Residues 722-735 (QRQKEAMEKRKDSQ) show a composition bias toward basic and acidic residues. Positions 1007–1226 (ASGKKLHNIL…SGCSAITEDE (220 aa)) are globular. The span at 1053–1064 (LLSESESEEESD) shows a compositional bias: acidic residues.

Belongs to the TRAFAC class myosin-kinesin ATPase superfamily. Kinesin family. Chromokinesin subfamily. The cofactor is [2Fe-2S] cluster. [4Fe-4S] cluster is required as a cofactor. In terms of tissue distribution, expressed in oocytes, eggs, testes and brain.

The protein localises to the nucleus. Its subcellular location is the chromosome. The protein resides in the cytoplasm. It is found in the cytoskeleton. Iron-sulfur (Fe-S) cluster binding motor protein that has a role in chromosome segregation during mitosis. Required for mitotic chromosomal positioning and bipolar spindle stabilization. In Xenopus laevis (African clawed frog), this protein is Chromosome-associated kinesin KIF4 (kif4).